The chain runs to 253 residues: Zwei Ig domain protein zig-4 (253 aa).

Positions Met-1 to Ala-16 are cleaved as a signal peptide. Ig-like C2-type domains follow at residues Pro-43–Glu-146 and Pro-162–Tyr-245. Disulfide bonds link Cys-67–Cys-130 and Cys-183–Cys-229.

Expressed in PVT, ASK, BAG, M2 and ASI neurons. In L1 larvae, expressed in pharyngeal ectoderm and mesoderm.

Its subcellular location is the secreted. Required for maintaining axon position of PVQ and PVP neurons postembryonically in the ventral nerve cord (VNC) by preventing axons drifting into the opposite side of the VNC that could occur during body growth and movement. The polypeptide is Zwei Ig domain protein zig-4 (Caenorhabditis elegans).